A 669-amino-acid polypeptide reads, in one-letter code: DNA ligase (669 aa).

Residues 34–38, 83–84, and E117 each bind NAD(+); these read DAEYD and SL. Residue K119 is the N6-AMP-lysine intermediate of the active site. NAD(+) contacts are provided by R140, E177, K293, and K317. The Zn(2+) site is built by C411, C414, C429, and C434. In terms of domain architecture, BRCT spans 591-669; the sequence is RLGGRFTGKT…EDEFLKMLEG (79 aa).

The protein belongs to the NAD-dependent DNA ligase family. LigA subfamily. Mg(2+) is required as a cofactor. It depends on Mn(2+) as a cofactor.

It carries out the reaction NAD(+) + (deoxyribonucleotide)n-3'-hydroxyl + 5'-phospho-(deoxyribonucleotide)m = (deoxyribonucleotide)n+m + AMP + beta-nicotinamide D-nucleotide.. In terms of biological role, DNA ligase that catalyzes the formation of phosphodiester linkages between 5'-phosphoryl and 3'-hydroxyl groups in double-stranded DNA using NAD as a coenzyme and as the energy source for the reaction. It is essential for DNA replication and repair of damaged DNA. The protein is DNA ligase of Geotalea daltonii (strain DSM 22248 / JCM 15807 / FRC-32) (Geobacter daltonii).